The primary structure comprises 617 residues: V-type proton ATPase catalytic subunit A (617 aa).

The residue at position 136 (Thr-136) is a Phosphothreonine. 250–257 (GAFGCGKT) is an ATP binding site. At Ser-384 the chain carries Phosphoserine; by AMPK.

Belongs to the ATPase alpha/beta chains family. As to quaternary structure, V-ATPase is a heteromultimeric enzyme made up of two complexes: the ATP-hydrolytic V1 complex and the proton translocation V0 complex. The V1 complex consists of three catalytic AB heterodimers that form a heterohexamer, three peripheral stalks each consisting of EG heterodimers, one central rotor including subunits D and F, and the regulatory subunits C and H. The proton translocation complex V0 consists of the proton transport subunit a, a ring of proteolipid subunits c9c'', rotary subunit d, subunits e and f, and the accessory subunits ATP6AP1/Ac45 and ATP6AP2/PRR. Interacts with the V0 complex V-ATPase subunit a4 ATP6V0A4. Interacts with WFS1. Interacts with alpha-crystallin B chain/CRYAB and with MTOR, forming a ternary complex. Post-translationally, phosphorylation at Ser-384 by AMPK down-regulates its enzyme activity.

It is found in the cytoplasm. It localises to the cytosol. The protein resides in the cytoplasmic vesicle. Its subcellular location is the secretory vesicle. The protein localises to the clathrin-coated vesicle membrane. It is found in the lysosome. It carries out the reaction ATP + H2O + 4 H(+)(in) = ADP + phosphate + 5 H(+)(out). With respect to regulation, ATP hydrolysis occurs at the interface between the nucleotide-binding domains of subunits A and B. ATP hydrolysis triggers a conformational change in the subunits D and F, which induces a shift of subunit d. The c-ring is subsequently rotated and results in a continuous proton translocation across the membrane. Its function is as follows. Catalytic subunit of the V1 complex of vacuolar(H+)-ATPase (V-ATPase), a multisubunit enzyme composed of a peripheral complex (V1) that hydrolyzes ATP and a membrane integral complex (V0) that translocates protons. V-ATPase is responsible for acidifying and maintaining the pH of intracellular compartments and in some cell types, is targeted to the plasma membrane, where it is responsible for acidifying the extracellular environment. In aerobic conditions, involved in intracellular iron homeostasis, thus triggering the activity of Fe(2+) prolyl hydroxylase (PHD) enzymes, and leading to HIF1A hydroxylation and subsequent proteasomal degradation. May play a role in neurite development and synaptic connectivity. This Pongo abelii (Sumatran orangutan) protein is V-type proton ATPase catalytic subunit A (ATP6V1A).